The primary structure comprises 130 residues: Small ribosomal subunit protein uS8 (130 aa).

Belongs to the universal ribosomal protein uS8 family. As to quaternary structure, part of the 30S ribosomal subunit. Contacts proteins S5 and S12.

Functionally, one of the primary rRNA binding proteins, it binds directly to 16S rRNA central domain where it helps coordinate assembly of the platform of the 30S subunit. This Shewanella sp. (strain MR-7) protein is Small ribosomal subunit protein uS8.